Reading from the N-terminus, the 301-residue chain is Polynucleotide kinase (301 aa).

Homotetramer. The cofactor is Mg(2+).

The enzyme catalyses a 5'-end dephospho-2'-deoxyribonucleoside-DNA + ATP = a 5'-end 5'-phospho-2'-deoxyribonucleoside-DNA + ADP + H(+). The catalysed reaction is a 2'-deoxyribonucleoside 3'-phosphate + H2O = a 2'-deoxyribonucleoside + phosphate. In terms of biological role, acts as a 5'-hydroxyl kinase, a 3'-phosphatase and a 2',3'-cyclic phosphodiesterase. Catalyzes the transfer of the terminal phosphate of ATP to the 5'-hydroxyl termini of ribo- and deoxyribonucleotides. In the presence of ADP the enzyme also catalyzes an exchange reaction. In the exchange reaction, an excess ADP causes the enzyme to transfer the 5' terminal phosphate from phosphorylated DNA to ADP. Involved in countering a host defense mechanism which activates T4-induced anticodon nuclease and shuts off viral translation. The polynucleotide kinase modifies the ends of nicked tRNA generated by the antiviral response of the host bacteria and facilitates repair by T4 RNA ligase. The protein is Polynucleotide kinase (pseT) of Escherichia coli (Bacteriophage T4).